Here is a 108-residue protein sequence, read N- to C-terminus: UPF0166 protein MJ1524 (108 aa).

This sequence belongs to the UPF0166 family.

In Methanocaldococcus jannaschii (strain ATCC 43067 / DSM 2661 / JAL-1 / JCM 10045 / NBRC 100440) (Methanococcus jannaschii), this protein is UPF0166 protein MJ1524.